A 451-amino-acid chain; its full sequence is Cysteine protease ATG4 (451 aa).

The active-site Nucleophile is Cys-122. Active-site residues include Asp-297 and His-299.

The protein belongs to the peptidase C54 family. In terms of assembly, interacts with ATG8.

It is found in the cytoplasm. The protein localises to the nucleus. Its subcellular location is the preautophagosomal structure. It carries out the reaction [protein]-C-terminal L-amino acid-glycyl-phosphatidylethanolamide + H2O = [protein]-C-terminal L-amino acid-glycine + a 1,2-diacyl-sn-glycero-3-phosphoethanolamine. Its function is as follows. Cysteine protease that plays a key role in cytoplasm to vacuole transport (Cvt) and autophagy by mediating both proteolytic activation and delipidation of ATG8. Required for selective autophagic degradation of the nucleus (nucleophagy) as well as for mitophagy which contributes to regulate mitochondrial quantity and quality by eliminating the mitochondria to a basal level to fulfill cellular energy requirements and preventing excess ROS production. The protease activity is required for proteolytic activation of ATG8: cleaves the C-terminal amino acid of ATG8 to reveal a C-terminal glycine. ATG8 ubiquitin-like activity requires the exposure of the glycine at the C-terminus for its conjugation to phosphatidylethanolamine (PE) and its insertion to membranes, which is necessary for autophagy. The ATG8-PE conjugate mediates tethering between adjacent membranes and stimulates membrane hemifusion, leading to expansion of the autophagosomal membrane during autophagy. In addition to the protease activity, also catalyzes deconjugation of PE-conjugated forms of ATG8 during macroautophagy: ATG8 delipidation is required to release the protein from membranes, which facilitates multiple events during macroautophagy, and especially for efficient autophagosome biogenesis, the assembly of ATG9-containing tubulovesicular clusters into phagophores/autophagosomes, and for the disassembly of PAS-associated ATG components. ATG8 delipidation by ATG4 also recycles ATG8-PE generated on inappropriate membranes to maintain a reservoir of unlipidated ATG8 that is required for autophagosome formation at the PAS. The chain is Cysteine protease ATG4 from Kluyveromyces marxianus (strain DMKU3-1042 / BCC 29191 / NBRC 104275) (Yeast).